The sequence spans 220 residues: Cytidylate kinase (220 aa).

ATP is bound at residue 10–18; it reads GPASSGKST.

This sequence belongs to the cytidylate kinase family. Type 1 subfamily.

Its subcellular location is the cytoplasm. It carries out the reaction CMP + ATP = CDP + ADP. The catalysed reaction is dCMP + ATP = dCDP + ADP. In Lactococcus lactis subsp. cremoris (strain SK11), this protein is Cytidylate kinase.